We begin with the raw amino-acid sequence, 127 residues long: Probable soluble cytochrome b562 1 (127 aa).

The N-terminal stretch at 1 to 21 (MRKIPIIAGVFSLLITSCTFA) is a signal peptide. Met-28 and His-123 together coordinate heme b.

It belongs to the cytochrome b562 family. Requires heme b as cofactor.

It is found in the periplasm. Functionally, electron-transport protein of unknown function. The polypeptide is Probable soluble cytochrome b562 1 (cybC1) (Yersinia pestis).